The primary structure comprises 446 residues: Na(+)-translocating NADH-quinone reductase subunit A (446 aa).

This sequence belongs to the NqrA family. Composed of six subunits; NqrA, NqrB, NqrC, NqrD, NqrE and NqrF.

The enzyme catalyses a ubiquinone + n Na(+)(in) + NADH + H(+) = a ubiquinol + n Na(+)(out) + NAD(+). Functionally, NQR complex catalyzes the reduction of ubiquinone-1 to ubiquinol by two successive reactions, coupled with the transport of Na(+) ions from the cytoplasm to the periplasm. NqrA to NqrE are probably involved in the second step, the conversion of ubisemiquinone to ubiquinol. The protein is Na(+)-translocating NADH-quinone reductase subunit A of Vibrio parahaemolyticus serotype O3:K6 (strain RIMD 2210633).